The following is a 520-amino-acid chain: Putative cytochrome P450 CYP13A3 (520 aa).

Cys464 lines the heme pocket.

Belongs to the cytochrome P450 family. It depends on heme as a cofactor.

Cytochromes P450 are a group of heme-thiolate monooxygenases. They oxidize a variety of structurally unrelated compounds, including steroids, fatty acids, and xenobiotics. This is Putative cytochrome P450 CYP13A3 (cyp-13A3) from Caenorhabditis elegans.